Here is a 438-residue protein sequence, read N- to C-terminus: 23S rRNA (uracil(1939)-C(5))-methyltransferase RlmD (438 aa).

The region spanning 11-69 is the TRAM domain; the sequence is LQPESKHQQVLVEKLDHQGAGIAYLNKKPLFIDGTLPGEEVVTQLTESKSKFARGKLIK. [4Fe-4S] cluster is bound by residues C82, C88, C91, and C169. S-adenosyl-L-methionine-binding residues include Q272, F301, N306, E322, N349, and D370. C396 serves as the catalytic Nucleophile.

This sequence belongs to the class I-like SAM-binding methyltransferase superfamily. RNA M5U methyltransferase family. RlmD subfamily.

The catalysed reaction is uridine(1939) in 23S rRNA + S-adenosyl-L-methionine = 5-methyluridine(1939) in 23S rRNA + S-adenosyl-L-homocysteine + H(+). Its function is as follows. Catalyzes the formation of 5-methyl-uridine at position 1939 (m5U1939) in 23S rRNA. This Vibrio vulnificus (strain CMCP6) protein is 23S rRNA (uracil(1939)-C(5))-methyltransferase RlmD.